The following is a 528-amino-acid chain: PH domain-containing protein DDB_G0267786 (528 aa).

The PH domain occupies 59–180; sequence SDVFSGYLVK…WIEIFKTCCR (122 aa).

This is PH domain-containing protein DDB_G0267786 from Dictyostelium discoideum (Social amoeba).